We begin with the raw amino-acid sequence, 527 residues long: Coiled-coil domain-containing protein 148 (527 aa).

2 coiled-coil regions span residues 289 to 353 (LAKD…TEIK) and 401 to 438 (LEKRLMERKKLALQEVQEEEERERRLEALRKQVAVAVQ).

The polypeptide is Coiled-coil domain-containing protein 148 (Ccdc148) (Mus musculus (Mouse)).